The sequence spans 204 residues: Small ribosomal subunit protein uS7 (204 aa).

It belongs to the universal ribosomal protein uS7 family. In terms of assembly, part of the 30S ribosomal subunit.

One of the primary rRNA binding proteins, it binds directly to 16S rRNA where it nucleates assembly of the head domain of the 30S subunit. Is located at the subunit interface close to the decoding center. The protein is Small ribosomal subunit protein uS7 of Methanoregula boonei (strain DSM 21154 / JCM 14090 / 6A8).